Consider the following 206-residue polypeptide: Protein GrpE (206 aa).

A disordered region spans residues 1–36 (MTDSNGPKDNNQDQAQAAADPVVSKPYIMPDDPEDG).

Belongs to the GrpE family. In terms of assembly, homodimer.

It localises to the cytoplasm. Functionally, participates actively in the response to hyperosmotic and heat shock by preventing the aggregation of stress-denatured proteins, in association with DnaK and GrpE. It is the nucleotide exchange factor for DnaK and may function as a thermosensor. Unfolded proteins bind initially to DnaJ; upon interaction with the DnaJ-bound protein, DnaK hydrolyzes its bound ATP, resulting in the formation of a stable complex. GrpE releases ADP from DnaK; ATP binding to DnaK triggers the release of the substrate protein, thus completing the reaction cycle. Several rounds of ATP-dependent interactions between DnaJ, DnaK and GrpE are required for fully efficient folding. This Rhodopseudomonas palustris (strain HaA2) protein is Protein GrpE.